A 404-amino-acid polypeptide reads, in one-letter code: Immediate early response gene 5-like protein (404 aa).

Disordered stretches follow at residues Ala-86 to Ala-107, Ala-160 to Ser-231, and Gln-308 to Gly-327. A compositionally biased stretch (pro residues) spans Pro-177–Pro-194. A compositionally biased stretch (low complexity) spans Ala-195–Ser-231. The span at Gln-308–Ala-318 shows a compositional bias: acidic residues.

It belongs to the IER family.

This is Immediate early response gene 5-like protein (IER5L) from Homo sapiens (Human).